The chain runs to 143 residues: Large ribosomal subunit protein uL15 (143 aa).

A disordered region spans residues 1 to 57 (MQLNNLKPAAGSKHAKRRVGRGIGSGLGKTAGRGHKGQKSRSGGFHKVGFEGGQMPL). Gly residues predominate over residues 21–31 (RGIGSGLGKTA).

Belongs to the universal ribosomal protein uL15 family. As to quaternary structure, part of the 50S ribosomal subunit.

Its function is as follows. Binds to the 23S rRNA. This Ralstonia pickettii (strain 12J) protein is Large ribosomal subunit protein uL15.